A 346-amino-acid chain; its full sequence is Sesquiterpene synthase Agr1 (346 aa).

Positions 98, 234, 238, and 242 each coordinate Mg(2+). A DDXXD motif motif is present at residues 98–102 (DNLSD). 2 residues coordinate (2E,6E)-farnesyl diphosphate: Arg322 and Tyr323.

The protein belongs to the terpene synthase family. The cofactor is Mg(2+).

It carries out the reaction (2E,6E)-farnesyl diphosphate = delta-cadinene + diphosphate. The catalysed reaction is (2E,6E)-farnesyl diphosphate = alpha-muurolene + diphosphate. The enzyme catalyses (2E,6E)-farnesyl diphosphate = gamma-muurolene + diphosphate. It catalyses the reaction (2E,6E)-farnesyl diphosphate = alpha-selinene + diphosphate. Its function is as follows. Terpene cyclase that catalyzes the cyclization of farnesyl diphosphate (FPP) to various sesquiterpenes, including alpha-muurolene, gamma-muurolene, alpha-selinene, beta-selinene, delta-cadinene, alpha-cadinol and delta-cadinol. Delta-cadinene is the major product of Agr1. This chain is Sesquiterpene synthase Agr1, found in Cyclocybe aegerita (Black poplar mushroom).